Reading from the N-terminus, the 477-residue chain is Bile acid transporter (477 aa).

A run of 15 helical transmembrane segments spans residues 13 to 33 (FVPF…TAVL), 50 to 70 (WISL…GKLG), 83 to 103 (IVIF…IFML), 107 to 127 (FIVG…IVTE), 139 to 159 (LYML…GLIM), 166 to 186 (VMMW…TFSI), 206 to 226 (LVVV…NIGW), 228 to 248 (STAF…LVMV), 272 to 292 (LILF…IVFV), 301 to 321 (IISS…SVII), 333 to 353 (VLTF…LFKA), 359 to 379 (IFAA…TIFM), 381 to 401 (VALS…YGLF), 406 to 426 (APFG…ANIA), and 444 to 464 (ISSI…GIIL).

Belongs to the major facilitator superfamily.

The protein resides in the cell membrane. It participates in lipid metabolism; bile acid degradation. The protein is Bile acid transporter (baiG) of Clostridium scindens (strain JCM 10418 / VPI 12708).